The sequence spans 123 residues: Ribosome-binding factor A (123 aa).

The protein belongs to the RbfA family. As to quaternary structure, monomer. Binds 30S ribosomal subunits, but not 50S ribosomal subunits or 70S ribosomes.

It localises to the cytoplasm. Functionally, one of several proteins that assist in the late maturation steps of the functional core of the 30S ribosomal subunit. Associates with free 30S ribosomal subunits (but not with 30S subunits that are part of 70S ribosomes or polysomes). Required for efficient processing of 16S rRNA. May interact with the 5'-terminal helix region of 16S rRNA. The protein is Ribosome-binding factor A of Acetivibrio thermocellus (strain ATCC 27405 / DSM 1237 / JCM 9322 / NBRC 103400 / NCIMB 10682 / NRRL B-4536 / VPI 7372) (Clostridium thermocellum).